The following is a 472-amino-acid chain: Clampless protein 1 (472 aa).

2 N-linked (GlcNAc...) asparagine glycosylation sites follow: Asn70 and Asn296.

Its function is as follows. Required for developmental progression after cells of opposite mating types fuse with one another, essential for processes common to both dikaryotic filament formation and monokaryotic fruiting. A direct target for transcription factors Sxi1-alpha and Sxi2-a. The chain is Clampless protein 1 from Cryptococcus neoformans var. neoformans serotype D (strain B-3501A) (Filobasidiella neoformans).